A 57-amino-acid chain; its full sequence is Putative secreted protein ML2569.1 (57 aa).

Positions 1–32 are cleaved as a signal peptide; that stretch reads MSRIVAPAAASVVVGLLLGAATIFGMTLMVQQ. A disordered region spans residues 34–57; sequence TKPPLPGGDPQSSVLNRVEYGNRT.

In Mycobacterium leprae (strain TN), this protein is Putative secreted protein ML2569.1.